Reading from the N-terminus, the 1551-residue chain is ABC-type transporter phomO (1551 aa).

Transmembrane regions (helical) follow at residues 34 to 54 (LYFEEVVFVLVPSCVFILLAA), 110 to 130 (CTAGLLVTLHVAGLILLCTTV), 139 to 159 (SVPASVVAALAFGVVPVLAHF), 172 to 192 (SSSLLVGLFLCVAVLLRAPLV), 202 to 222 (GSALVAVEIASLVLQLVLIAV), 314 to 334 (LGLYALAPVIPRLCLAGFTLA), and 358 to 378 (GLIGATFLIYTGIAVSTGWYW). Residues 326-599 (LCLAGFTLAQ…LLQIIPSFGA (274 aa)) form the ABC transmembrane type-1 1 domain. Asn-384 carries N-linked (GlcNAc...) asparagine glycosylation. The next 4 helical transmembrane spans lie at 428–448 (LAYAHELWVAPIETAIGTWML), 452–472 (VGPPGLVVLGIIGVCLGASTY), 535–555 (LIVGTLLSSYSTATLAPVLVF), and 577–597 (LIWISLLASPLIQLLQIIPSF). In terms of domain architecture, ABC transporter 1 spans 645–861 (IHNSSFSYTD…VEDENGDVDN (217 aa)). Asn-647 carries N-linked (GlcNAc...) asparagine glycosylation. An ATP-binding site is contributed by 678-685 (GPAGCGKS). The N-linked (GlcNAc...) asparagine glycan is linked to Asn-721. The disordered stretch occupies residues 843–889 (YQFPPSQADVEDENGDVDNGAENTRPRESSHTTEAQSGPPEPKSKPT). 4 helical membrane-spanning segments follow: residues 903 to 923 (SIGFLNLVLFIGGGIIFAFCL), 959 to 979 (VLPLIAVAGWVAQLMMLIVPL), 1027 to 1044 (LFNTAAALLTGIAQVILI), and 1137 to 1157 (LVLNLVVAGLALVVMGAAVGL). Residues 910–1199 (VLFIGGGIIF…LLTAWTSLET (290 aa)) enclose the ABC transmembrane type-1 2 domain. An N-linked (GlcNAc...) asparagine glycan is attached at Asn-1179. A compositionally biased stretch (basic and acidic residues) spans 1219–1228 (DVLVRPDSLD). Residues 1219–1296 (DVLVRPDSLD…HEATTITTTS (78 aa)) are disordered. The span at 1259–1270 (YDDDDESDENTD) shows a compositional bias: acidic residues. One can recognise an ABC transporter 2 domain in the interval 1287 to 1535 (HEATTITTTS…SDIFAFFGRS (249 aa)). 1323-1330 (GRTGSGKS) lines the ATP pocket. Asn-1486 is a glycosylation site (N-linked (GlcNAc...) asparagine).

The protein belongs to the ABC transporter superfamily. ABCC family. Conjugate transporter (TC 3.A.1.208) subfamily.

It is found in the membrane. Functionally, ABC-type transporter; part of the gene cluster that mediates the biosynthesis of the phomopsins, a group of hexapeptide mycotoxins which infects lupins and causes lupinosis disease in livestock. This chain is ABC-type transporter phomO, found in Diaporthe leptostromiformis (Lupinosis disease fungus).